The chain runs to 809 residues: Ferric-pyoverdine BN7/BN8 receptor (809 aa).

Positions 1–45 are cleaved as a signal peptide; sequence MNHTARKRQGWQRSVSQKLAGAVVQGIACMGASAPLLLMPAWATA. Residues 166-273 form the TBDR plug domain; that stretch reads TPRETPQSLT…PSATINLIRK (108 aa). One can recognise a TBDR beta-barrel domain in the interval 278-809; sequence EAQASITGEA…NVMTSFKYSF (532 aa). The short motif at 792-809 is the TonB C-terminal box element; sequence YGVYGTPRNVMTSFKYSF.

This sequence belongs to the TonB-dependent receptor family.

The protein resides in the cell outer membrane. Its function is as follows. Specific receptor for the siderophores ferric pyoverdines (pseudobactins) BN8 and BN7, iron chelating molecules that allow the organism to extract iron from the environment, especially under iron-restricted conditions. In Pseudomonas putida (Arthrobacter siderocapsulatus), this protein is Ferric-pyoverdine BN7/BN8 receptor (pupB).